Here is a 551-residue protein sequence, read N- to C-terminus: Chaperonin GroEL 2 (551 aa).

Residues 30-33 (TLGP), Lys51, 87-91 (DGTTT), Gly415, and Asp496 contribute to the ATP site.

It belongs to the chaperonin (HSP60) family. In terms of assembly, forms a cylinder of 14 subunits composed of two heptameric rings stacked back-to-back. Interacts with the co-chaperonin GroES.

It is found in the cytoplasm. It catalyses the reaction ATP + H2O + a folded polypeptide = ADP + phosphate + an unfolded polypeptide.. Functionally, together with its co-chaperonin GroES, plays an essential role in assisting protein folding. The GroEL-GroES system forms a nano-cage that allows encapsulation of the non-native substrate proteins and provides a physical environment optimized to promote and accelerate protein folding. This is Chaperonin GroEL 2 from Rhodopseudomonas palustris (strain BisB18).